Reading from the N-terminus, the 115-residue chain is Large ribosomal subunit protein bL19 (115 aa).

The protein belongs to the bacterial ribosomal protein bL19 family.

This protein is located at the 30S-50S ribosomal subunit interface and may play a role in the structure and function of the aminoacyl-tRNA binding site. The chain is Large ribosomal subunit protein bL19 from Streptococcus suis (strain 98HAH33).